We begin with the raw amino-acid sequence, 421 residues long: Forkhead box protein fkh-4 (421 aa).

Residues 118–218 constitute a DNA-binding region (fork-head); that stretch reads RPPISYVALC…SDADFDFFRK (101 aa).

The protein localises to the nucleus. In terms of biological role, transcription factor. Regulates expression of a class of small RNAs, known as 21U-RNAs, perhaps acting redundantly with fkh-3 and fkh-5. This chain is Forkhead box protein fkh-4, found in Caenorhabditis elegans.